Reading from the N-terminus, the 270-residue chain is Putative pyruvate, phosphate dikinase regulatory protein 1 (270 aa).

151–158 contacts ADP; that stretch reads GVSRTSKT.

The protein belongs to the pyruvate, phosphate/water dikinase regulatory protein family. PDRP subfamily.

The catalysed reaction is N(tele)-phospho-L-histidyl/L-threonyl-[pyruvate, phosphate dikinase] + ADP = N(tele)-phospho-L-histidyl/O-phospho-L-threonyl-[pyruvate, phosphate dikinase] + AMP + H(+). It carries out the reaction N(tele)-phospho-L-histidyl/O-phospho-L-threonyl-[pyruvate, phosphate dikinase] + phosphate + H(+) = N(tele)-phospho-L-histidyl/L-threonyl-[pyruvate, phosphate dikinase] + diphosphate. Bifunctional serine/threonine kinase and phosphorylase involved in the regulation of the pyruvate, phosphate dikinase (PPDK) by catalyzing its phosphorylation/dephosphorylation. The protein is Putative pyruvate, phosphate dikinase regulatory protein 1 of Enterococcus faecalis (strain ATCC 700802 / V583).